Reading from the N-terminus, the 73-residue chain is uncharacterized protein (73 aa).

The next 2 helical transmembrane spans lie at 10 to 30 and 42 to 62; these read ILLAILFFALVVSLVGLYVSA and YSTVYKVLMNAAMLLIVIYLI.

Its subcellular location is the cell membrane. This is an uncharacterized protein from Archaeoglobus fulgidus (strain ATCC 49558 / DSM 4304 / JCM 9628 / NBRC 100126 / VC-16).